The primary structure comprises 293 residues: 33 kDa chaperonin (293 aa).

2 disulfide bridges follow: C237/C239 and C271/C274.

This sequence belongs to the HSP33 family. In terms of processing, under oxidizing conditions two disulfide bonds are formed involving the reactive cysteines. Under reducing conditions zinc is bound to the reactive cysteines and the protein is inactive.

Its subcellular location is the cytoplasm. In terms of biological role, redox regulated molecular chaperone. Protects both thermally unfolding and oxidatively damaged proteins from irreversible aggregation. Plays an important role in the bacterial defense system toward oxidative stress. In Haemophilus influenzae (strain 86-028NP), this protein is 33 kDa chaperonin.